Reading from the N-terminus, the 159-residue chain is MISKNVRIAKGAVIVGDVTIGDYSSVWYNAVIRGDVDKIIIGNYSNIQDCCVVHCSKGYPTIIGDYVSIGHGAVIHGCRIEDNVLVGMNATILNGAKIGENCIIGANALVTQNKEIPPNSLVLGVPGRVVRELTEEEIKSIKENALRYVKLSETLESYK.

Residues 33-35 (RGD) and 48-49 (QD) contribute to the substrate site. Zn(2+)-binding residues include histidine 54, histidine 71, and histidine 76.

Belongs to the gamma-class carbonic anhydrase family. It depends on Zn(2+) as a cofactor.

The enzyme catalyses hydrogencarbonate + H(+) = CO2 + H2O. In terms of biological role, probably reversibly hydrates carbon dioxide. The protein is Probable carbonic anhydrase of Methanocaldococcus jannaschii (strain ATCC 43067 / DSM 2661 / JAL-1 / JCM 10045 / NBRC 100440) (Methanococcus jannaschii).